The following is a 39-amino-acid chain: Photosystem II reaction center protein J (39 aa).

Residues 7–27 (IPLWIVATVAGTGVLVVVGLF) traverse the membrane as a helical segment.

It belongs to the PsbJ family. As to quaternary structure, PSII is composed of 1 copy each of membrane proteins PsbA, PsbB, PsbC, PsbD, PsbE, PsbF, PsbH, PsbI, PsbJ, PsbK, PsbL, PsbM, PsbT, PsbX, PsbY, PsbZ, Psb30/Ycf12, peripheral proteins PsbO, CyanoQ (PsbQ), PsbU, PsbV and a large number of cofactors. It forms dimeric complexes.

The protein localises to the cellular thylakoid membrane. In terms of biological role, one of the components of the core complex of photosystem II (PSII). PSII is a light-driven water:plastoquinone oxidoreductase that uses light energy to abstract electrons from H(2)O, generating O(2) and a proton gradient subsequently used for ATP formation. It consists of a core antenna complex that captures photons, and an electron transfer chain that converts photonic excitation into a charge separation. The sequence is that of Photosystem II reaction center protein J from Synechococcus elongatus (strain ATCC 33912 / PCC 7942 / FACHB-805) (Anacystis nidulans R2).